The sequence spans 347 residues: MNIENEVHIENASESKREPKPPEGLLEDDTIYITTPYGKISLDGGRIQVKDSDGEIVASFPLEKVCTMNVFGSASVSTPLLKHCSDKEVVINYFTNFGKYFGSFVPSRNTIALVRRHQAGITKEKSLAICREIIHAKLQNSCVFLARKRVEVPSLLKELRDRSLHAVSVDSLRGIEGEAASIYFPMLSSSLPDEWRSDKRTRRPPRDELNALLSLTYTMVNTEVISALRQYNLDPFIGVMHVDRHGKPALALDLLEEFRPVFCDAFVARLINKRMITKDDFTQGSRLNDTAFKKYLGFYHDFMEESLKHPRFKYSVSRKKAIQIQAIIFRKAICGELKGYYPFIYAR.

Over residues 1–21 (MNIENEVHIENASESKREPKP) the composition is skewed to basic and acidic residues. Positions 1–25 (MNIENEVHIENASESKREPKPPEGL) are disordered. Mn(2+)-binding residues include Glu-176, His-241, and Glu-256.

Belongs to the CRISPR-associated endonuclease Cas1 family. As to quaternary structure, homodimer, forms a heterotetramer with a Cas2 homodimer. Mg(2+) serves as cofactor. It depends on Mn(2+) as a cofactor.

Functionally, CRISPR (clustered regularly interspaced short palindromic repeat), is an adaptive immune system that provides protection against mobile genetic elements (viruses, transposable elements and conjugative plasmids). CRISPR clusters contain spacers, sequences complementary to antecedent mobile elements, and target invading nucleic acids. CRISPR clusters are transcribed and processed into CRISPR RNA (crRNA). Acts as a dsDNA endonuclease. Involved in the integration of spacer DNA into the CRISPR cassette. The polypeptide is CRISPR-associated endonuclease Cas1 4 (Methanospirillum hungatei JF-1 (strain ATCC 27890 / DSM 864 / NBRC 100397 / JF-1)).